A 277-amino-acid chain; its full sequence is MSPSAIHNITSDLPSSQQHRPFAGKVALITGSGRGIGRGIALELGKRGASCIINYAKSAGAANEVVAELAKLGSKSIALQADISKPADVAALFEKALKHYGHIDFAISNSGMEVWCEETEVTPELFDQVFNLNTRGQFFVAQNALKHCSEGGRIILTSSIAAQMTGIPNHALYAGSKAAVEGFARSFAVDCGRKRITCNALAPGGIQTDMFDENSWHYVPGGYQGMNIDTIKDGLAKMCPLNRVGTPADIGKIVCMLVSDEGEWINGQVLRCSGGGV.

Residues I36, D82, and N109 each coordinate NADP(+). Active-site proton donor residues include S158, S159, and Y173. NADP(+)-binding residues include Y173, K177, I206, and T208. Catalysis depends on K177, which acts as the Lowers pKa of active site Tyr.

The protein belongs to the short-chain dehydrogenases/reductases (SDR) family.

It carries out the reaction scytalone + NADP(+) = naphthalene-1,3,6,8-tetrol + NADPH + H(+). It participates in pigment biosynthesis; melanin biosynthesis. In terms of biological role, tetrahydroxynaphthalene reductase; part of the gene cluster that mediates the biosynthesis of dihydroxynaphthalene (DHN)-melanin, a bluish-green pigment forming a dark layer in the conidial wall that protects the conidia from UV radiations. The first step of the pathway is the production of the pentaketide 1,3,6,8-tetrahydroxynaphthalene (1,3,6,8-THN or T4HN) by the polyketide synthase PfmaE though condensation of acetyl-CoA with malonyl-CoA. T4HN is not stable and easily oxidizes into the stable form flaviolin. T4HN is also substrate of the hydroxynaphthalene reductase PfmaG to yield scytalone. The scytalone dehydratase PfmaJ then reduces scytalone to 1,3,8-THN. 1,3,8-THN is then substrate of the hydroxynaphthalene reductase PfmaI to yield vermelone. Vermelone is further converted by the multicopper oxidase PfmaD to 1,8-DHN. Finally the laccase PFICI_06862 transforms 1,8-DHN to DHN-melanin. The roles of the 5-oxoprolinase PfmaA and the proline iminopeptidase PfmaB within the cluster have not been elucidated yet. This Pestalotiopsis fici (strain W106-1 / CGMCC3.15140) protein is Tetrahydroxynaphthalene reductase PfmaG.